Consider the following 126-residue polypeptide: Small ribosomal subunit protein uS8 (126 aa).

It belongs to the universal ribosomal protein uS8 family. In terms of assembly, part of the 30S ribosomal subunit. Contacts proteins S5 and S12.

Functionally, one of the primary rRNA binding proteins, it binds directly to 16S rRNA central domain where it helps coordinate assembly of the platform of the 30S subunit. This chain is Small ribosomal subunit protein uS8, found in Nitratidesulfovibrio vulgaris (strain ATCC 29579 / DSM 644 / CCUG 34227 / NCIMB 8303 / VKM B-1760 / Hildenborough) (Desulfovibrio vulgaris).